The following is a 243-amino-acid chain: NH(3)-dependent NAD(+) synthetase (243 aa).

Residue 31–38 coordinates ATP; it reads GVSGGIDS. Asp-37 serves as a coordination point for Mg(2+). Residue Arg-110 coordinates deamido-NAD(+). Thr-130 contacts ATP. Glu-135 lines the Mg(2+) pocket. Lys-143 and Asp-150 together coordinate deamido-NAD(+). Lys-159 and Ser-181 together coordinate ATP. Deamido-NAD(+) is bound at residue 227 to 228; the sequence is HK.

This sequence belongs to the NAD synthetase family. In terms of assembly, homodimer.

It catalyses the reaction deamido-NAD(+) + NH4(+) + ATP = AMP + diphosphate + NAD(+) + H(+). It participates in cofactor biosynthesis; NAD(+) biosynthesis; NAD(+) from deamido-NAD(+) (ammonia route): step 1/1. Functionally, catalyzes the ATP-dependent amidation of deamido-NAD to form NAD. Uses ammonia as a nitrogen source. The chain is NH(3)-dependent NAD(+) synthetase from Malacoplasma penetrans (strain HF-2) (Mycoplasma penetrans).